The sequence spans 507 residues: ATP synthase subunit alpha, chloroplastic (507 aa).

170-177 is an ATP binding site; it reads GDRQTGKT.

Belongs to the ATPase alpha/beta chains family. As to quaternary structure, F-type ATPases have 2 components, CF(1) - the catalytic core - and CF(0) - the membrane proton channel. CF(1) has five subunits: alpha(3), beta(3), gamma(1), delta(1), epsilon(1). CF(0) has four main subunits: a, b, b' and c.

It localises to the plastid. The protein resides in the chloroplast thylakoid membrane. It carries out the reaction ATP + H2O + 4 H(+)(in) = ADP + phosphate + 5 H(+)(out). Its function is as follows. Produces ATP from ADP in the presence of a proton gradient across the membrane. The alpha chain is a regulatory subunit. This chain is ATP synthase subunit alpha, chloroplastic, found in Panax ginseng (Korean ginseng).